The following is a 244-amino-acid chain: Phosphoadenosine 5'-phosphosulfate reductase (244 aa).

The active-site Nucleophile; cysteine thiosulfonate intermediate is the Cys239.

The protein belongs to the PAPS reductase family. CysH subfamily.

It is found in the cytoplasm. It catalyses the reaction [thioredoxin]-disulfide + sulfite + adenosine 3',5'-bisphosphate + 2 H(+) = [thioredoxin]-dithiol + 3'-phosphoadenylyl sulfate. Its pathway is sulfur metabolism; hydrogen sulfide biosynthesis; sulfite from sulfate: step 3/3. In terms of biological role, catalyzes the formation of sulfite from phosphoadenosine 5'-phosphosulfate (PAPS) using thioredoxin as an electron donor. In Salmonella choleraesuis (strain SC-B67), this protein is Phosphoadenosine 5'-phosphosulfate reductase.